Reading from the N-terminus, the 138-residue chain is MSTIHVDVVSATESLYSGEVLCVFAPASTGELGIYPKHTALLSILKPGEVRIETDKGIESIYVSGGIVEVQPDVVTIFSDTAIRANDLDEFKVLEAKQRAQDEMDNSIDTQDISATQAALSESMAQLQMINKMRGKKC.

This sequence belongs to the ATPase epsilon chain family. As to quaternary structure, F-type ATPases have 2 components, CF(1) - the catalytic core - and CF(0) - the membrane proton channel. CF(1) has five subunits: alpha(3), beta(3), gamma(1), delta(1), epsilon(1). CF(0) has three main subunits: a, b and c.

It is found in the cell inner membrane. Its function is as follows. Produces ATP from ADP in the presence of a proton gradient across the membrane. In Vesicomyosocius okutanii subsp. Calyptogena okutanii (strain HA), this protein is ATP synthase epsilon chain.